A 623-amino-acid chain; its full sequence is MFKVLIITLLVNKIHLEKIYNVPVNCGELHPVKAHEIKCPQRLNELSLQAHHNLAKDEHYNKICRPQLKDDAHLEGFICRKQRWITKCSETWYFSTSIEYQILEVIPEYSGCTDAVKKLDQGALIPPYYPPAGCFWNTEMNQEIEFYVLIQHKPFLNPYDNLIYDSRFLTPCTINDSKTKGCPLKDITGTWIPDVRVEEISEHCNNKHWECITVKSFRSELNDKERLWEAPDIGLVHVNKGCLSTFCGKNGIIFEDGEWWSIENQTESDFQNFKIEKCKGKKPGFRMHTDRTEFEELDIKAELEHERCLNTISKILNKENINTLDMSYLAPTRPGRDYAYLFEQTSWQEKLCLSLPDSGRVSKDCNIDWRTSTRGGMVKKNHYGIGSYKRAWCEYRPFVDKNEDGYIDIQELNGHNMSGNHAILETAPAGGSSGNRLNVTLNGMIFVEPTKLYLHTKSLYEGIEDYQKLIKFEVMEYDNVEENLIRYEEDEKFKPVNLNPHEKSQINRTDIVREIQKGGKKVLSAVVGWFTSTAKAVRWTIWAVGAIVTTYAIYKLYKMVKSNSSHSKHREADLEGLQSTTKENMRVEKNDKNYQDLELGLYEEIRSIKGGSKQTGDDRFFDH.

The first 12 residues, 1 to 12 (MFKVLIITLLVN), serve as a signal peptide directing secretion. The Virion surface portion of the chain corresponds to 13 to 539 (KIHLEKIYNV…FTSTAKAVRW (527 aa)). N-linked (GlcNAc...) asparagine; by host glycans are attached at residues Asn-175, Asn-264, Asn-416, Asn-438, and Asn-507. A helical transmembrane segment spans residues 540 to 554 (TIWAVGAIVTTYAIY). The Intravirion segment spans residues 555-623 (KLYKMVKSNS…QTGDDRFFDH (69 aa)).

Belongs to the rhabdoviruses glycoprotein family. In terms of assembly, homotrimer.

The protein localises to the virion membrane. Functionally, attaches the virus to host cellular receptors, inducing endocytosis of the virion. The acidic pH of the endosome induces conformational changes in the glycoprotein trimer which trigger fusion between the virus and the cell membrane. This Bovine ephemeral fever virus (strain BB7721) (BEFV) protein is Glycoprotein (G).